The following is a 272-amino-acid chain: UPF0759 protein YecE (272 aa).

It belongs to the UPF0759 family.

This Escherichia coli O157:H7 protein is UPF0759 protein YecE (yecE).